A 483-amino-acid polypeptide reads, in one-letter code: Aspartyl/glutamyl-tRNA(Asn/Gln) amidotransferase subunit B (483 aa).

This sequence belongs to the GatB/GatE family. GatB subfamily. As to quaternary structure, heterotrimer of A, B and C subunits.

It catalyses the reaction L-glutamyl-tRNA(Gln) + L-glutamine + ATP + H2O = L-glutaminyl-tRNA(Gln) + L-glutamate + ADP + phosphate + H(+). The enzyme catalyses L-aspartyl-tRNA(Asn) + L-glutamine + ATP + H2O = L-asparaginyl-tRNA(Asn) + L-glutamate + ADP + phosphate + 2 H(+). Allows the formation of correctly charged Asn-tRNA(Asn) or Gln-tRNA(Gln) through the transamidation of misacylated Asp-tRNA(Asn) or Glu-tRNA(Gln) in organisms which lack either or both of asparaginyl-tRNA or glutaminyl-tRNA synthetases. The reaction takes place in the presence of glutamine and ATP through an activated phospho-Asp-tRNA(Asn) or phospho-Glu-tRNA(Gln). The sequence is that of Aspartyl/glutamyl-tRNA(Asn/Gln) amidotransferase subunit B from Rickettsia felis (strain ATCC VR-1525 / URRWXCal2) (Rickettsia azadi).